Reading from the N-terminus, the 361-residue chain is UDP-N-acetylglucosamine--N-acetylmuramyl-(pentapeptide) pyrophosphoryl-undecaprenol N-acetylglucosamine transferase (361 aa).

Residues S199 and Q290 each coordinate UDP-N-acetyl-alpha-D-glucosamine.

It belongs to the glycosyltransferase 28 family. MurG subfamily.

It localises to the cell membrane. It carries out the reaction Mur2Ac(oyl-L-Ala-gamma-D-Glu-L-Lys-D-Ala-D-Ala)-di-trans,octa-cis-undecaprenyl diphosphate + UDP-N-acetyl-alpha-D-glucosamine = beta-D-GlcNAc-(1-&gt;4)-Mur2Ac(oyl-L-Ala-gamma-D-Glu-L-Lys-D-Ala-D-Ala)-di-trans,octa-cis-undecaprenyl diphosphate + UDP + H(+). It functions in the pathway cell wall biogenesis; peptidoglycan biosynthesis. In terms of biological role, cell wall formation. Catalyzes the transfer of a GlcNAc subunit on undecaprenyl-pyrophosphoryl-MurNAc-pentapeptide (lipid intermediate I) to form undecaprenyl-pyrophosphoryl-MurNAc-(pentapeptide)GlcNAc (lipid intermediate II). The sequence is that of UDP-N-acetylglucosamine--N-acetylmuramyl-(pentapeptide) pyrophosphoryl-undecaprenol N-acetylglucosamine transferase from Streptococcus mutans serotype c (strain ATCC 700610 / UA159).